The primary structure comprises 177 residues: Large ribosomal subunit protein uL5 (177 aa).

Belongs to the universal ribosomal protein uL5 family. Part of the 50S ribosomal subunit; part of the 5S rRNA/L5/L18/L25 subcomplex. Contacts the 5S rRNA and the P site tRNA. Forms a bridge to the 30S subunit in the 70S ribosome.

In terms of biological role, this is one of the proteins that bind and probably mediate the attachment of the 5S RNA into the large ribosomal subunit, where it forms part of the central protuberance. In the 70S ribosome it contacts protein S13 of the 30S subunit (bridge B1b), connecting the 2 subunits; this bridge is implicated in subunit movement. Contacts the P site tRNA; the 5S rRNA and some of its associated proteins might help stabilize positioning of ribosome-bound tRNAs. This chain is Large ribosomal subunit protein uL5, found in Neorickettsia sennetsu (strain ATCC VR-367 / Miyayama) (Ehrlichia sennetsu).